The following is a 1316-amino-acid chain: DNA-directed RNA polymerase subunit beta' (1316 aa).

Zn(2+)-binding residues include Cys60, Cys62, Cys75, and Cys78. 3 residues coordinate Mg(2+): Asp535, Asp537, and Asp539. Positions 891, 968, 975, and 978 each coordinate Zn(2+).

This sequence belongs to the RNA polymerase beta' chain family. The RNAP catalytic core consists of 2 alpha, 1 beta, 1 beta' and 1 omega subunit. When a sigma factor is associated with the core the holoenzyme is formed, which can initiate transcription. Mg(2+) serves as cofactor. The cofactor is Zn(2+).

It catalyses the reaction RNA(n) + a ribonucleoside 5'-triphosphate = RNA(n+1) + diphosphate. Functionally, DNA-dependent RNA polymerase catalyzes the transcription of DNA into RNA using the four ribonucleoside triphosphates as substrates. The protein is DNA-directed RNA polymerase subunit beta' of Mycobacterium leprae (strain Br4923).